A 302-amino-acid chain; its full sequence is ATP synthase mitochondrial F1 complex assembly factor 1 (302 aa).

The protein belongs to the ATP11 family. In terms of assembly, interacts with ATP5F1B; involved in the assembly of the F1 component of the mitochondrial ATP synthase (ATPase).

Its subcellular location is the mitochondrion inner membrane. Has a complex stabilizing activity in the assembly of the mitochondrial F1-F0 complex. This chain is ATP synthase mitochondrial F1 complex assembly factor 1 (atpaf1), found in Danio rerio (Zebrafish).